A 217-amino-acid polypeptide reads, in one-letter code: MKFFIDTADVGEIKKALALGLCDGVTTNPSLVAKTGRGFEDVLKEIVQLVPGPISAEVTATDYEGMLREGRHYAKFGSQVVIKVPLTVDGLRAVKTLTDEGTKVNVTLCFSPVQALLAAKAGATYISPFVGRLDDISQDGMAMVADIVQIYRNYGFKTQVLVASVRHPVHVLEAAKLGADVATIPYSVIEQLAKHPLTDAGLKKFLADWEKVPKAPK.

Catalysis depends on lysine 83, which acts as the Schiff-base intermediate with substrate.

The protein belongs to the transaldolase family. Type 3B subfamily.

It is found in the cytoplasm. The enzyme catalyses D-sedoheptulose 7-phosphate + D-glyceraldehyde 3-phosphate = D-erythrose 4-phosphate + beta-D-fructose 6-phosphate. It functions in the pathway carbohydrate degradation; pentose phosphate pathway; D-glyceraldehyde 3-phosphate and beta-D-fructose 6-phosphate from D-ribose 5-phosphate and D-xylulose 5-phosphate (non-oxidative stage): step 2/3. Its function is as follows. Transaldolase is important for the balance of metabolites in the pentose-phosphate pathway. The polypeptide is Probable transaldolase (Anaeromyxobacter sp. (strain K)).